The chain runs to 541 residues: Tryptophan N-monooxygenase 1 (541 aa).

The chain crosses the membrane as a helical span at residues 21 to 41 (FSTLYLLSTLQAFVAITLVML). A heme-binding site is contributed by Cys477.

Belongs to the cytochrome P450 family. Heme is required as a cofactor. As to expression, found in all tissues tested. Highest expression in roots, and low expression in stem.

The protein localises to the membrane. The catalysed reaction is L-tryptophan + 2 reduced [NADPH--hemoprotein reductase] + 2 O2 = (E)-(indol-3-yl)acetaldehyde oxime + 2 oxidized [NADPH--hemoprotein reductase] + CO2 + 3 H2O + 2 H(+). Functionally, converts tryptophan to indole-3-acetaldoxime, a precursor for tryptophan-derived glucosinolates and indole-3-acetic acid (IAA). Involved in the biosynthetic pathway to 4-hydroxyindole-3-carbonyl nitrile (4-OH-ICN), a cyanogenic metabolite required for inducible pathogen defense. The polypeptide is Tryptophan N-monooxygenase 1 (CYP79B2) (Arabidopsis thaliana (Mouse-ear cress)).